The following is a 1244-amino-acid chain: Putative late blight resistance protein homolog R1A-4 (1244 aa).

2 coiled-coil regions span residues 411–434 and 526–548; these read RYSDSLAFLKNQLQVIQTEFESLQ and PRMNEEIVGFKDVIENLRNQLLN. The NB-ARC domain maps to 527-755; it reads RMNEEIVGFK…ECWEQVANDL (229 aa). ATP is bound at residue 560-567; it reads GMPGLGKT. 5 LRR repeats span residues 978–1004, 1079–1103, 1127–1150, 1153–1178, and 1213–1237; these read LWNLETLILNRRSVVHKILLPSTVWDM, PIRLEILKLYRSNAFKAIPFCISAP, LKNLEVLKLYYVEFGDHREWKVSN, FPQLKILKLEDVSLMKWIVADDAFPN, and ESVVKSAMNIQETQVEDYQNTNFKL.

Belongs to the disease resistance NB-LRR family.

It localises to the cytoplasm. Its subcellular location is the membrane. Its function is as follows. Confers resistance to late blight (Phytophthora infestans) races carrying the avirulence gene Avr1. Resistance proteins guard the plant against pathogens that contain an appropriate avirulence protein via an indirect interaction with this avirulence protein. That triggers a defense system including the hypersensitive response, which restricts the pathogen growth. This is Putative late blight resistance protein homolog R1A-4 (R1A-4) from Solanum demissum (Wild potato).